A 204-amino-acid polypeptide reads, in one-letter code: Holliday junction branch migration complex subunit RuvA (204 aa).

The interval 1 to 64 is domain I; that stretch reads MFAFLRGELV…EDLQQLFGFL (64 aa). A domain II region spans residues 65–143; it reads DEEELQLFRL…KIQPTSSAKA (79 aa). The tract at residues 144 to 151 is flexible linker; it reads GAPSAVLS. The segment at 151–204 is domain III; it reads SATQLIDDAVAALTTLGFPKASAQKAVSKVLETTPGLSVEELVRTSLAAMHNNL.

It belongs to the RuvA family. Homotetramer. Forms an RuvA(8)-RuvB(12)-Holliday junction (HJ) complex. HJ DNA is sandwiched between 2 RuvA tetramers; dsDNA enters through RuvA and exits via RuvB. An RuvB hexamer assembles on each DNA strand where it exits the tetramer. Each RuvB hexamer is contacted by two RuvA subunits (via domain III) on 2 adjacent RuvB subunits; this complex drives branch migration. In the full resolvosome a probable DNA-RuvA(4)-RuvB(12)-RuvC(2) complex forms which resolves the HJ.

The protein localises to the cytoplasm. In terms of biological role, the RuvA-RuvB-RuvC complex processes Holliday junction (HJ) DNA during genetic recombination and DNA repair, while the RuvA-RuvB complex plays an important role in the rescue of blocked DNA replication forks via replication fork reversal (RFR). RuvA specifically binds to HJ cruciform DNA, conferring on it an open structure. The RuvB hexamer acts as an ATP-dependent pump, pulling dsDNA into and through the RuvAB complex. HJ branch migration allows RuvC to scan DNA until it finds its consensus sequence, where it cleaves and resolves the cruciform DNA. In Chlorobaculum parvum (strain DSM 263 / NCIMB 8327) (Chlorobium vibrioforme subsp. thiosulfatophilum), this protein is Holliday junction branch migration complex subunit RuvA.